The chain runs to 256 residues: Imidazole glycerol phosphate synthase subunit HisF (256 aa).

Active-site residues include D12 and D131.

The protein belongs to the HisA/HisF family. Heterodimer of HisH and HisF.

The protein resides in the cytoplasm. The enzyme catalyses 5-[(5-phospho-1-deoxy-D-ribulos-1-ylimino)methylamino]-1-(5-phospho-beta-D-ribosyl)imidazole-4-carboxamide + L-glutamine = D-erythro-1-(imidazol-4-yl)glycerol 3-phosphate + 5-amino-1-(5-phospho-beta-D-ribosyl)imidazole-4-carboxamide + L-glutamate + H(+). The protein operates within amino-acid biosynthesis; L-histidine biosynthesis; L-histidine from 5-phospho-alpha-D-ribose 1-diphosphate: step 5/9. IGPS catalyzes the conversion of PRFAR and glutamine to IGP, AICAR and glutamate. The HisF subunit catalyzes the cyclization activity that produces IGP and AICAR from PRFAR using the ammonia provided by the HisH subunit. The protein is Imidazole glycerol phosphate synthase subunit HisF of Pseudomonas syringae pv. syringae (strain B728a).